The chain runs to 324 residues: Inhibitor of growth protein 1 homolog (324 aa).

Residues 120-237 (AEEEKKKKKS…SSRKQKSMAA (118 aa)) form a disordered region. Over residues 140–169 (SSTTSSSSSSSSSSLSLSSSTNNTSSLNSS) the composition is skewed to low complexity. The span at 170 to 186 (SGGGGGGSGGGGGGGGH) shows a compositional bias: gly residues. The segment covering 201–229 (SLTSSSSSGNINGMSSSSSSSSSSSSLSS) has biased composition (low complexity). The PHD-type zinc-finger motif lies at 271–320 (PTYCFCNRVSFGEMVGCENPDCKIEWFHFECVGLTSTPKGKWYCPDCTRI). Residues Cys-274, Cys-276, Cys-287, Cys-292, His-298, Cys-301, Cys-314, and Cys-317 each coordinate Zn(2+).

Belongs to the ING family. In terms of assembly, interacts with H3K4me3 and to a lesser extent with H3K4me2.

The protein localises to the nucleus. Involved in regulation of the growth and differentiation transition (GDT) process, probably by regulating gene expression via histone modification. In Dictyostelium discoideum (Social amoeba), this protein is Inhibitor of growth protein 1 homolog.